The chain runs to 694 residues: Pentatricopeptide repeat-containing protein At3g12770 (694 aa).

PPR repeat units lie at residues 52-82 (SGFL…LPRP), 83-117 (QIFP…RVSP), 118-152 (DSFT…GFDA), 153-183 (DVFV…LPLP), 186-220 (TIVS…DVKP), 221-255 (DWVA…GLEI), 256-286 (EPDL…MKSP), 287-321 (NLIL…DVRP), 322-356 (DTIS…DYRD), 357-387 (DVFI…TLDR), 388-422 (DVVV…GVHP), 423-457 (NDVT…KINP), and 458-488 (QQQH…MPVQ). Positions 493-568 (VWGALLSACK…DVGCSWVEVR (76 aa)) are type E motif. The tract at residues 569-599 (GRLEAFRVGDKSHPRYEEIERQVEWIESRLK) is type E(+) motif. The interval 600–694 (EGGFVANKDA…DGVCSCGDYW (95 aa)) is type DYW motif.

This sequence belongs to the PPR family. PCMP-H subfamily.

In Arabidopsis thaliana (Mouse-ear cress), this protein is Pentatricopeptide repeat-containing protein At3g12770 (PCMP-H43).